Here is a 390-residue protein sequence, read N- to C-terminus: LL-diaminopimelate aminotransferase 2 (390 aa).

Residues tyrosine 13 and glycine 38 each coordinate substrate. Pyridoxal 5'-phosphate contacts are provided by residues tyrosine 67, 102-103 (SK), tyrosine 127, asparagine 177, tyrosine 208, and 236-238 (SLS). Substrate contacts are provided by lysine 103, tyrosine 127, and asparagine 177. Lysine 239 is subject to N6-(pyridoxal phosphate)lysine. Pyridoxal 5'-phosphate is bound at residue arginine 247. Arginine 365 contacts substrate.

The protein belongs to the class-I pyridoxal-phosphate-dependent aminotransferase family. LL-diaminopimelate aminotransferase subfamily. As to quaternary structure, homodimer. It depends on pyridoxal 5'-phosphate as a cofactor.

It catalyses the reaction (2S,6S)-2,6-diaminopimelate + 2-oxoglutarate = (S)-2,3,4,5-tetrahydrodipicolinate + L-glutamate + H2O + H(+). It participates in amino-acid biosynthesis; L-lysine biosynthesis via DAP pathway; LL-2,6-diaminopimelate from (S)-tetrahydrodipicolinate (aminotransferase route): step 1/1. Involved in the synthesis of meso-diaminopimelate (m-DAP or DL-DAP), required for both lysine and peptidoglycan biosynthesis. Catalyzes the direct conversion of tetrahydrodipicolinate to LL-diaminopimelate. This Nostoc sp. (strain PCC 7120 / SAG 25.82 / UTEX 2576) protein is LL-diaminopimelate aminotransferase 2.